Reading from the N-terminus, the 215-residue chain is Thymidylate kinase (215 aa).

12–19 (GIDGAGKS) contacts ATP.

Belongs to the thymidylate kinase family.

The catalysed reaction is dTMP + ATP = dTDP + ADP. Phosphorylation of dTMP to form dTDP in both de novo and salvage pathways of dTTP synthesis. The sequence is that of Thymidylate kinase from Albidiferax ferrireducens (strain ATCC BAA-621 / DSM 15236 / T118) (Rhodoferax ferrireducens).